A 608-amino-acid polypeptide reads, in one-letter code: Aspartate--tRNA(Asp/Asn) ligase (608 aa).

An L-aspartate-binding site is contributed by E175. The interval 199 to 202 is aspartate; that stretch reads QLFK. An L-aspartate-binding site is contributed by R221. ATP is bound by residues 221–223 and Q230; that span reads RDE. H453 contributes to the L-aspartate binding site. Residue E487 coordinates ATP. R494 contacts L-aspartate. 539–542 provides a ligand contact to ATP; that stretch reads GWDR. The disordered stretch occupies residues 566–608; that stretch reads IDPLTDAPAAITPQQRKEAGIDAKPKPKAEAQAEAQAEESAEK. Over residues 580–596 the composition is skewed to basic and acidic residues; that stretch reads QRKEAGIDAKPKPKAEA.

Belongs to the class-II aminoacyl-tRNA synthetase family. Type 1 subfamily. In terms of assembly, homodimer.

It localises to the cytoplasm. The enzyme catalyses tRNA(Asx) + L-aspartate + ATP = L-aspartyl-tRNA(Asx) + AMP + diphosphate. Its function is as follows. Aspartyl-tRNA synthetase with relaxed tRNA specificity since it is able to aspartylate not only its cognate tRNA(Asp) but also tRNA(Asn). Reaction proceeds in two steps: L-aspartate is first activated by ATP to form Asp-AMP and then transferred to the acceptor end of tRNA(Asp/Asn). The sequence is that of Aspartate--tRNA(Asp/Asn) ligase from Corynebacterium glutamicum (strain R).